The primary structure comprises 539 residues: Probable malate:quinone oxidoreductase 3 (539 aa).

The segment at 516–539 (LEPPVSPQRPESIRPADSQGVASR) is disordered.

It belongs to the MQO family. FAD serves as cofactor.

The enzyme catalyses (S)-malate + a quinone = a quinol + oxaloacetate. The protein operates within carbohydrate metabolism; tricarboxylic acid cycle; oxaloacetate from (S)-malate (quinone route): step 1/1. This chain is Probable malate:quinone oxidoreductase 3, found in Pseudomonas putida (strain ATCC 47054 / DSM 6125 / CFBP 8728 / NCIMB 11950 / KT2440).